Here is a 443-residue protein sequence, read N- to C-terminus: Thymidine phosphorylase (443 aa).

Belongs to the thymidine/pyrimidine-nucleoside phosphorylase family. In terms of assembly, homodimer.

The enzyme catalyses thymidine + phosphate = 2-deoxy-alpha-D-ribose 1-phosphate + thymine. The protein operates within pyrimidine metabolism; dTMP biosynthesis via salvage pathway; dTMP from thymine: step 1/2. Its function is as follows. The enzymes which catalyze the reversible phosphorolysis of pyrimidine nucleosides are involved in the degradation of these compounds and in their utilization as carbon and energy sources, or in the rescue of pyrimidine bases for nucleotide synthesis. The protein is Thymidine phosphorylase of Shewanella woodyi (strain ATCC 51908 / MS32).